Here is a 378-residue protein sequence, read N- to C-terminus: MLWHLVFILIAILLLTFSPKIESLFKSFTINKPTKTTCYQYTTREQLKSILESDTHETNFCIEKPSISPPKTNSTLLMLCRNSDVFSVLETIQNIQDRFNDKYNYDYTFLNDVPFNYEFIYLVSSIIPHGKINFGLIPIEHWSYPSHINISLATEIRQNYANVPYGDSESYRHMCRFYSGFFYKHELVKQYQYYWRIEPGIKIYCDIDYDVFEYMIINDKKYGFVISLFEYSETIPTLWNHVVQYINDNEIKSELLPLLTNKYNWYNLCHFWSNFEIANLDIFNNDDYENFFQYLDNLGGFYYERWGDAPIHSIAIALFLQKKDIHWFENIGYYHVPYLQCPQDIDLYVKNKCTCNPDEDFTWSDLSCTNHFLNILHN.

Topologically, residues 1 to 4 are cytoplasmic; that stretch reads MLWH. A helical; Signal-anchor for type II membrane protein membrane pass occupies residues 5-25; it reads LVFILIAILLLTFSPKIESLF. The Lumenal portion of the chain corresponds to 26-378; the sequence is KSFTINKPTK…TNHFLNILHN (353 aa). Residues N73 and N149 are each glycosylated (N-linked (GlcNAc...) asparagine).

Belongs to the glycosyltransferase 15 family.

The protein resides in the membrane. In terms of biological role, transfers an alpha-D-mannosyl residue from GDP-mannose into lipid-linked oligosaccharide, forming an alpha-(1-&gt;2)-D-mannosyl-D-mannose linkage. The chain is Probable mannosyltransferase MNT3 (MNT3) from Candida albicans (strain SC5314 / ATCC MYA-2876) (Yeast).